The primary structure comprises 308 residues: Polyketide transferase claH (308 aa).

The tract at residues 50–280 (SDIAVYFSQQ…RVEVAAGKSH (231 aa)) is abhydrolase domain.

The protein belongs to the polyketide transferase af380 family.

It functions in the pathway secondary metabolite biosynthesis. In terms of biological role, polyketide transferase; part of the cla gene cluster that produces clavatol and ortho-quinone methide. The clavatol biosynthesis cluster cla and the terrestric acid cluster tra are both involved in the production of peniphenones and penilactones. The non-reducing PKS claF is responsible for the formation of clavatol from successive condensations of 3 malonyl-CoA units, presumably with a simple acetyl-CoA starter unit, and 2 methylation steps. The esterase claE probably collaborates with claF by catalyzing the hydrolysis of ACP-bound acyl intermediates to free the ACP from stalled intermediates. The clavatol oxidase claD then converts clavatol to hydroxyclavatol. Spontaneous dehydration of hydroxyclavatol leads to the accumulation of the highly active ortho-quinone methide. On the other hand, the PKS-NRPS hybrid traA is involved in the formation of crustosic acid, with the help of traB and traD. The polyketide synthase module (PKS) of traA is responsible for the synthesis of the polyketide backbone via the condensation of an acetyl-CoA starter unit with 3 malonyl-CoA units. The downstream nonribosomal peptide synthetase (NRPS) module then amidates the carboxyl end of the polyketide with L-malic acid. Because traA lacks a designated enoylreductase (ER) domain, the required activity is provided the enoyl reductase traG. Crustosic acid undergoes decarboxylation and isomerization to the terrestric acid, catalyzed by the 2-oxoglutarate-dependent dioxygenase traH. Both acids are further converted to the 2 gamma-butyrolactones (R)-5-methyltetronic acid and (S)-5-carboxylmethyltetronic acid, with involvement of the cytochrome P450 monooxygenase claJ. Spontaneous addition of the methide to these gamma-butyrolactones leads to peniphenone D and penilactone D, which undergo again stereospecific attacking by methide to give penilactones A and B. The function of the polyketide transferase claH has not been investigated yet. This is Polyketide transferase claH from Penicillium crustosum (Blue mold fungus).